The sequence spans 396 residues: S-adenosylmethionine synthase 3 (396 aa).

Glu-12 is a Mg(2+) binding site. An ATP-binding site is contributed by His-18. Glu-46 contacts K(+). 2 residues coordinate L-methionine: Glu-59 and Gln-102. ATP contacts are provided by residues 170–172 (DGK), 238–241 (SGRF), Asp-249, 255–256 (RK), Ala-272, Lys-276, and Lys-280. Asp-249 contacts L-methionine. An L-methionine-binding site is contributed by Lys-280.

It belongs to the AdoMet synthase family. Homotetramer. The cofactor is Mn(2+). It depends on Mg(2+) as a cofactor. Co(2+) serves as cofactor. Requires K(+) as cofactor.

The protein resides in the cytoplasm. It catalyses the reaction L-methionine + ATP + H2O = S-adenosyl-L-methionine + phosphate + diphosphate. Its pathway is amino-acid biosynthesis; S-adenosyl-L-methionine biosynthesis; S-adenosyl-L-methionine from L-methionine: step 1/1. Functionally, catalyzes the formation of S-adenosylmethionine from methionine and ATP. The reaction comprises two steps that are both catalyzed by the same enzyme: formation of S-adenosylmethionine (AdoMet) and triphosphate, and subsequent hydrolysis of the triphosphate. This chain is S-adenosylmethionine synthase 3 (METK3), found in Oryza sativa subsp. japonica (Rice).